We begin with the raw amino-acid sequence, 789 residues long: SWI5-dependent HO expression protein 4 (789 aa).

Phosphoserine is present on serine 18.

The protein resides in the cytoplasm. Its function is as follows. Required for mother cell-specific ho expression. Might be required for the transport of factors (such as ASH1) that promote HO repression from the mother cell into its bud. This chain is SWI5-dependent HO expression protein 4 (SHE4), found in Saccharomyces cerevisiae (strain ATCC 204508 / S288c) (Baker's yeast).